An 83-amino-acid chain; its full sequence is uncharacterized protein (83 aa).

A disordered region spans residues 40–65; the sequence is RMQAGASPDEDNDVNGETSFSRSFGG. The span at 54–65 shows a compositional bias: polar residues; that stretch reads NGETSFSRSFGG.

This is an uncharacterized protein from Dictyostelium discoideum (Social amoeba).